The chain runs to 469 residues: Acyltransferase clz18 (469 aa).

The next 7 membrane-spanning stretches (helical) occupy residues 21 to 41 (GLLSIIIFNAHLTPVIILGYD), 70 to 90 (LFTIPILKLVYSASPAVCLFF), 134 to 154 (LSLLAMASMIVPFALMKTGFF), 253 to 273 (ILAALAVLGVAVGSLECPLFW), 346 to 366 (GLIVPPRTWHSLGAVLVLYSL), 391 to 411 (IYLIHFCLVISFGPDLFSWVW), and 424 to 444 (VGFGITYSILFMAVLLTAAIF).

Belongs to the acyltransferase 3 family.

Its subcellular location is the membrane. It participates in secondary metabolite biosynthesis. Acyltransferase; part of the gene cluster that mediates the biosynthesis of squalestatin S1 (SQS1, also known as zaragozic acid A), a heavily oxidized fungal polyketide that offers potent cholesterol lowering activity by targeting squalene synthase (SS). SQS1 is composed of a 2,8-dioxobicyclic[3.2.1]octane-3,4,5-tricarboxyclic acid core that is connected to two lipophilic polyketide arms. These initial steps feature the priming of an unusual benzoic acid starter unit onto the highly reducing polyketide synthase clz14, followed by oxaloacetate extension and product release to generate a tricarboxylic acid containing product. The phenylalanine ammonia lyase (PAL) clz10 and the acyl-CoA ligase clz12 are involved in transforming phenylalanine into benzoyl-CoA. The citrate synthase-like protein clz17 is involved in connecting the C-alpha-carbons of the hexaketide chain and oxaloacetate to afford the tricarboxylic acid unit. The potential hydrolytic enzymes, clz11 and clz13, are in close proximity to pks2 and may participate in product release. On the other side, the tetraketide arm is synthesized by a the squalestatin tetraketide synthase clz2 and enzymatically esterified to the core in the last biosynthetic step, by the acetyltransferase clz6. The biosynthesis of the tetraketide must involve 3 rounds of chain extension. After the first and second rounds methyl-transfer occurs, and in all rounds of extension the ketoreductase and dehydratase are active. The enoyl reductase and C-MeT of clz2 are not active in the final round of extension. The acetyltransferase clz6 appears to have a broad substrate selectivity for its acyl CoA substrate, allowing the in vitro synthesis of novel squalestatins. The biosynthesis of SQS1 requires several oxidative steps likely performed by oxidoreductases clz3, clz15 and clz16. Finally, in support of the identification of the cluster as being responsible for SQS1 production, the cluster contains a gene encoding a putative squalene synthase (SS) clz20, suggesting a likely mechanism for self-resistance. The sequence is that of Acyltransferase clz18 from Cochliobolus lunatus (Filamentous fungus).